The chain runs to 325 residues: 5-dehydro-2-deoxygluconokinase (325 aa).

This sequence belongs to the carbohydrate kinase PfkB family.

The enzyme catalyses 5-dehydro-2-deoxy-D-gluconate + ATP = 6-phospho-5-dehydro-2-deoxy-D-gluconate + ADP + H(+). Its pathway is polyol metabolism; myo-inositol degradation into acetyl-CoA; acetyl-CoA from myo-inositol: step 5/7. Functionally, catalyzes the phosphorylation of 5-dehydro-2-deoxy-D-gluconate (2-deoxy-5-keto-D-gluconate or DKG) to 6-phospho-5-dehydro-2-deoxy-D-gluconate (DKGP). In Bacillus subtilis (strain 168), this protein is 5-dehydro-2-deoxygluconokinase (iolC).